The primary structure comprises 65 residues: Alpha-toxin Lqq4 (65 aa).

An LCN-type CS-alpha/beta domain is found at 3 to 65; that stretch reads RDAYIADDKN…VPIRIPGKCR (63 aa). Positions 9–13 are specificity module, loop 1; that stretch reads DDKNC. 4 disulfide bridges follow: Cys13–Cys64, Cys17–Cys37, Cys23–Cys47, and Cys27–Cys49. Specificity module, loop stretches follow at residues 40–44 and 57–65; these read LGKYG and PIRIPGKCR. Arg65 carries the post-translational modification Arginine amide.

Belongs to the long (4 C-C) scorpion toxin superfamily. Sodium channel inhibitor family. Alpha subfamily. In terms of processing, the recombinant toxin which is used for activity tests is not amidated. However, C-terminal amidation does not appear to play an important role in activity, since the non-amidated recombinant toxin and the native toxin (which is amidated) show similar activities on all sodium channels tested. Expressed by the venom gland.

The protein resides in the secreted. Its function is as follows. Alpha toxins bind voltage-independently at site-3 of sodium channels (Nav) and inhibit the inactivation of the activated channels, thereby blocking neuronal transmission. Both native and recombinant (non-amidated) toxins inhibit inactivation of Nav1.2/SCN2A (EC(50)=31.2-36.6 nM), Nav1.6/SCN8A (EC(50)=6.9-8.9 nM), and Nav1.7/SCN9A (EC(50)=182.0-260.1 nM). The sequence is that of Alpha-toxin Lqq4 from Leiurus quinquestriatus quinquestriatus (Egyptian scorpion).